A 423-amino-acid polypeptide reads, in one-letter code: MTDKGKNDLTSKAKDKARGNPEKPPYWFEIIVSDPQKRTGDPGSSSGYVSYQISTKTNNTSFYDNRGDPESIIVVHRRYSDLLLLHDILLNRFPTCIIPPLPDKKVFQYIAGDRFSQRFTQKRCHSLQNFLRRVSLHPDLSQSKVFKTFLVSKDWESHRKVLQDSLQPNKDEVTDAFMNAFKTVHKQNEEFTEIREKSDKLDRTVTKIDKLFHKVVKKNDSMSEDYTKLGSNLQELQELVTGENEELAAKLKIFNEGVTQLSYGLQDLTKYLDYEYIVDLKDLEHYIDSMRQLIKLKDQKQIDYEELSDYLTRSIKEKNNLISGYGGSNFFANKLEELAGINQEASRREKINKLEGKITSLTGELENAKKVADGFEQECLKEIDHFESVKTAEIKKSLGSLADHHIEFYERILEAWEKVDDSL.

Positions 1-21 are enriched in basic and acidic residues; that stretch reads MTDKGKNDLTSKAKDKARGNP. Residues 1-25 are disordered; sequence MTDKGKNDLTSKAKDKARGNPEKPP. Residues 29-157 enclose the PX domain; it reads EIIVSDPQKR…TFLVSKDWES (129 aa). A 1,2-diacyl-sn-glycero-3-phospho-(1D-myo-inositol-3-phosphate)-binding residues include Arg78, Ser80, Lys104, and Arg123. Coiled coils occupy residues 217–252 and 346–381; these read KKND…AKLK and SRRE…ECLK.

Belongs to the sorting nexin family. Forms a complex with ATG20 and ATG17. Binds also to SNC1 and SNX41.

It is found in the cytoplasm. The protein resides in the cytosol. The protein localises to the preautophagosomal structure membrane. Its subcellular location is the endosome membrane. Functionally, sorting nexin, involved in the separation or division of vacuoles throughout the entire life cycle of the cells. Involved in retrieval of late-Golgi SNAREs from post-Golgi endosomes to the trans-Golgi network, for cytoplasm to vacuole transport (Cvt), and autophagy of large cargos including mitophagy, pexophagy and glycophagy. Involved in proper sorting of the v-SNARE protein SNC1. This chain is Sorting nexin-4, found in Saccharomyces cerevisiae (strain ATCC 204508 / S288c) (Baker's yeast).